The following is an 844-amino-acid chain: Serrate RNA effector molecule homolog B (844 aa).

Disordered stretches follow at residues 1–90 (MADS…HGSD), 277–401 (EAAK…PRPL), 555–575 (ELLSSAGRTPETEAPKEGNPT), and 794–825 (PNPYGAGRGNYDSFRGQGMYPGKPRNRMMRGD). Composition is skewed to basic and acidic residues over residues 16 to 73 (FRRE…RHDI) and 277 to 337 (EAAK…ETRK). Positions 349-359 (SDDGSDSESDT) are enriched in acidic residues. Residues 376 to 397 (DTPKKEEETEKPKEKPKEDTVK) are compositionally biased toward basic and acidic residues.

It belongs to the ARS2 family. Interacts ncbp1/cbp80.

The protein localises to the nucleus. It localises to the nucleoplasm. It is found in the cytoplasm. Functionally, acts as a mediator between the cap-binding complex (CBC) and the primary microRNAs (miRNAs) processing machinery during cell proliferation. Contributes to the stability and delivery of capped primary miRNA transcripts to the primary miRNA processing complex, thereby playing a role in RNA-mediated gene silencing (RNAi) by miRNAs. This chain is Serrate RNA effector molecule homolog B (srrt-b), found in Xenopus laevis (African clawed frog).